Reading from the N-terminus, the 1030-residue chain is MMS19 nucleotide excision repair protein homolog (1030 aa).

N-acetylalanine is present on alanine 2. At lysine 496 the chain carries N6-acetyllysine. 4 HEAT repeats span residues glutamine 866–lysine 904, leucine 908–glutamine 946, serine 949–proline 987, and leucine 990–proline 1028. Phosphoserine is present on serine 1027.

Belongs to the MET18/MMS19 family. As to quaternary structure, component of the CIA complex. In the CIA complex, interacts directly with CIAO2B and CIAO3. Component of the MMXD complex, composed of CIAO1, ERCC2, CIAO2B, MMS19 and SLC25A5. Interacts with CIAO2B; the interaction is direct. Interacts with ERCC2/XPD; the interaction is direct. Interacts with ERCC3/XPB and NCOA3/RAC3. Interacts with RTEL1; the interaction mediates the association of RTEL1 with the CIA complex. Interacts with BRIP1. Interacts with KIF4A; the interaction facilitates the transfer of Fe-S clusters to KIF4A to ensure proper localization of KIF4A to the mitotic machinery components. Interacts with CCDC117; the interaction is indirect. Post-translationally, ubiquitinated; undergoes 'Lys-48'-linked polyubiquitination by MAGEF1-NSMCE1 ubiquitin ligase complex leading to proteasomal degradation. Ubiquitously expressed with higher expression in testis.

It localises to the nucleus. The protein resides in the cytoplasm. Its subcellular location is the cytoskeleton. It is found in the spindle. The protein localises to the microtubule organizing center. It localises to the centrosome. Functionally, key component of the cytosolic iron-sulfur protein assembly (CIA) complex, a multiprotein complex that mediates the incorporation of iron-sulfur cluster into apoproteins specifically involved in DNA metabolism and genomic integrity. In the CIA complex, MMS19 acts as an adapter between early-acting CIA components and a subset of cellular target iron-sulfur proteins such as ERCC2/XPD, FANCJ and RTEL1, thereby playing a key role in nucleotide excision repair (NER), homologous recombination-mediated double-strand break DNA repair, DNA replication and RNA polymerase II (POL II) transcription. As part of the mitotic spindle-associated MMXD complex, plays a role in chromosome segregation, probably by facilitating iron-sulfur (Fe-S) cluster assembly into ERCC2/XPD. Together with CIAO2, facilitates the transfer of Fe-S clusters to the motor protein KIF4A, which ensures proper localization of KIF4A to mitotic machinery components to promote the progression of mitosis. Indirectly acts as a transcriptional coactivator of estrogen receptor (ER), via its role in iron-sulfur insertion into some component of the TFIIH-machinery. The protein is MMS19 nucleotide excision repair protein homolog of Homo sapiens (Human).